Here is a 474-residue protein sequence, read N- to C-terminus: Bifunctional protein HldE (474 aa).

The tract at residues 1–317 is ribokinase; the sequence is MKLSMPRFDQ…RRAIQRSEGS (317 aa). ATP is bound at residue 194 to 197; it reads NLSE. The active site involves Asp-263. The cytidylyltransferase stretch occupies residues 343-474; it reads FTNGCFDILH…AIVEKIRNNE (132 aa).

It in the N-terminal section; belongs to the carbohydrate kinase PfkB family. The protein in the C-terminal section; belongs to the cytidylyltransferase family. In terms of assembly, homodimer.

The catalysed reaction is D-glycero-beta-D-manno-heptose 7-phosphate + ATP = D-glycero-beta-D-manno-heptose 1,7-bisphosphate + ADP + H(+). It carries out the reaction D-glycero-beta-D-manno-heptose 1-phosphate + ATP + H(+) = ADP-D-glycero-beta-D-manno-heptose + diphosphate. Its pathway is nucleotide-sugar biosynthesis; ADP-L-glycero-beta-D-manno-heptose biosynthesis; ADP-L-glycero-beta-D-manno-heptose from D-glycero-beta-D-manno-heptose 7-phosphate: step 1/4. The protein operates within nucleotide-sugar biosynthesis; ADP-L-glycero-beta-D-manno-heptose biosynthesis; ADP-L-glycero-beta-D-manno-heptose from D-glycero-beta-D-manno-heptose 7-phosphate: step 3/4. In terms of biological role, catalyzes the phosphorylation of D-glycero-D-manno-heptose 7-phosphate at the C-1 position to selectively form D-glycero-beta-D-manno-heptose-1,7-bisphosphate. Functionally, catalyzes the ADP transfer from ATP to D-glycero-beta-D-manno-heptose 1-phosphate, yielding ADP-D-glycero-beta-D-manno-heptose. This chain is Bifunctional protein HldE, found in Pseudomonas fluorescens (strain SBW25).